The following is an 873-amino-acid chain: Alanine--tRNA ligase (873 aa).

The Zn(2+) site is built by His-559, His-563, Cys-661, and His-665.

This sequence belongs to the class-II aminoacyl-tRNA synthetase family. Zn(2+) is required as a cofactor.

It is found in the cytoplasm. The catalysed reaction is tRNA(Ala) + L-alanine + ATP = L-alanyl-tRNA(Ala) + AMP + diphosphate. Functionally, catalyzes the attachment of alanine to tRNA(Ala) in a two-step reaction: alanine is first activated by ATP to form Ala-AMP and then transferred to the acceptor end of tRNA(Ala). Also edits incorrectly charged Ser-tRNA(Ala) and Gly-tRNA(Ala) via its editing domain. This chain is Alanine--tRNA ligase, found in Acaryochloris marina (strain MBIC 11017).